The following is a 427-amino-acid chain: 3-phosphoshikimate 1-carboxyvinyltransferase (427 aa).

Lysine 20, serine 21, and arginine 25 together coordinate 3-phosphoshikimate. A phosphoenolpyruvate-binding site is contributed by lysine 20. Positions 92 and 120 each coordinate phosphoenolpyruvate. Serine 166, glutamine 168, aspartate 312, and lysine 339 together coordinate 3-phosphoshikimate. Glutamine 168 lines the phosphoenolpyruvate pocket. Aspartate 312 serves as the catalytic Proton acceptor. 2 residues coordinate phosphoenolpyruvate: arginine 343 and arginine 385.

This sequence belongs to the EPSP synthase family. As to quaternary structure, monomer.

It is found in the cytoplasm. The enzyme catalyses 3-phosphoshikimate + phosphoenolpyruvate = 5-O-(1-carboxyvinyl)-3-phosphoshikimate + phosphate. Its pathway is metabolic intermediate biosynthesis; chorismate biosynthesis; chorismate from D-erythrose 4-phosphate and phosphoenolpyruvate: step 6/7. Functionally, catalyzes the transfer of the enolpyruvyl moiety of phosphoenolpyruvate (PEP) to the 5-hydroxyl of shikimate-3-phosphate (S3P) to produce enolpyruvyl shikimate-3-phosphate and inorganic phosphate. The polypeptide is 3-phosphoshikimate 1-carboxyvinyltransferase (Streptococcus mutans serotype c (strain ATCC 700610 / UA159)).